A 212-amino-acid polypeptide reads, in one-letter code: MQNFDKTAVIDAANALPGRLTPMPVATLHVVNGHSMTHVPEGMEVAIFAMGCFWGVERLFWQQPGVYSTAAGYSGGYTPNPTYHEVCSGRTAHAEVVRVVFDPAIISYKQLLQIFWENHDPAQGMRQGGDVGTQYRSAIYVLTPEQETQAQESQALFQQAMTKAGDSRAITSEIAAALPFYYAEDDHQQYLYKNPQGYCGLGGIGVCMPPNL.

The active site involves cysteine 52.

The protein belongs to the MsrA Met sulfoxide reductase family.

It carries out the reaction L-methionyl-[protein] + [thioredoxin]-disulfide + H2O = L-methionyl-(S)-S-oxide-[protein] + [thioredoxin]-dithiol. The enzyme catalyses [thioredoxin]-disulfide + L-methionine + H2O = L-methionine (S)-S-oxide + [thioredoxin]-dithiol. Its function is as follows. Has an important function as a repair enzyme for proteins that have been inactivated by oxidation. Catalyzes the reversible oxidation-reduction of methionine sulfoxide in proteins to methionine. The polypeptide is Peptide methionine sulfoxide reductase MsrA (Yersinia enterocolitica serotype O:8 / biotype 1B (strain NCTC 13174 / 8081)).